The primary structure comprises 571 residues: Carboxylesterase 3 (571 aa).

A signal peptide spans 1–26 (MERAVRVESGVLVGVVCLLLACPATA). The cysteines at positions 97 and 124 are disulfide-linked. An N-linked (GlcNAc...) asparagine glycan is attached at Asn105. Residue Ser229 is the Acyl-ester intermediate of the active site. A disulfide bond links Cys281 and Cys292. Residues Glu347 and His460 each act as charge relay system in the active site. The Prevents secretion from ER signature appears at 568–571 (QEDL).

Belongs to the type-B carboxylesterase/lipase family. In terms of processing, N-glycosylated. As to expression, expressed in liver, colon and small intestine.

The protein localises to the endoplasmic reticulum lumen. The catalysed reaction is a carboxylic ester + H2O = an alcohol + a carboxylate + H(+). Involved in the detoxification of xenobiotics and in the activation of ester and amide prodrugs. Shows low catalytic efficiency for hydrolysis of CPT-11 (7-ethyl-10-[4-(1-piperidino)-1-piperidino]-carbonyloxycamptothecin), a prodrug for camptothecin used in cancer therapeutics. This chain is Carboxylesterase 3 (CES3), found in Homo sapiens (Human).